We begin with the raw amino-acid sequence, 906 residues long: Protein translocase subunit SecA (906 aa).

ATP contacts are provided by residues Gln87, 105–109, and Asp512; that span reads GEGKT. The disordered stretch occupies residues 875 to 897; sequence VTFVRDEQKVGRNDPCPCGSGKK. Cys890, Cys892, Cys901, and His902 together coordinate Zn(2+).

This sequence belongs to the SecA family. Monomer and homodimer. Part of the essential Sec protein translocation apparatus which comprises SecA, SecYEG and auxiliary proteins SecDF-YajC and YidC. The cofactor is Zn(2+).

It localises to the cell inner membrane. The protein resides in the cytoplasm. The catalysed reaction is ATP + H2O + cellular proteinSide 1 = ADP + phosphate + cellular proteinSide 2.. In terms of biological role, part of the Sec protein translocase complex. Interacts with the SecYEG preprotein conducting channel. Has a central role in coupling the hydrolysis of ATP to the transfer of proteins into and across the cell membrane, serving both as a receptor for the preprotein-SecB complex and as an ATP-driven molecular motor driving the stepwise translocation of polypeptide chains across the membrane. The protein is Protein translocase subunit SecA of Aeromonas hydrophila subsp. hydrophila (strain ATCC 7966 / DSM 30187 / BCRC 13018 / CCUG 14551 / JCM 1027 / KCTC 2358 / NCIMB 9240 / NCTC 8049).